A 262-amino-acid polypeptide reads, in one-letter code: Sulfur carrier protein FdhD (262 aa).

C107 serves as the catalytic Cysteine persulfide intermediate.

Belongs to the FdhD family.

It is found in the cytoplasm. Required for formate dehydrogenase (FDH) activity. Acts as a sulfur carrier protein that transfers sulfur from IscS to the molybdenum cofactor prior to its insertion into FDH. The sequence is that of Sulfur carrier protein FdhD from Bacillus pumilus (strain SAFR-032).